We begin with the raw amino-acid sequence, 488 residues long: Elongation factor Tu, chloroplastic (488 aa).

The disordered stretch occupies residues 1–20; the sequence is MALSSTAATTSSKLKLSNPP. A chloroplast-targeting transit peptide spans 1-79; the sequence is MALSSTAATT…RPSSSPFTVR (79 aa). The 205-residue stretch at 89–293 folds into the tr-type G domain; sequence KPHLNIGTIG…EVDKYIPIPQ (205 aa). Positions 98 to 105 are G1; sequence GHVDHGKT. 98–105 is a binding site for GTP; it reads GHVDHGKT. The interval 139–143 is G2; that stretch reads GITIN. The tract at residues 160–163 is G3; the sequence is DCPG. GTP is bound by residues 160 to 164 and 215 to 218; these read DCPGH and NKQD. Residues 215 to 218 form a G4 region; the sequence is NKQD. Positions 253-255 are G5; that stretch reads SAL.

It belongs to the TRAFAC class translation factor GTPase superfamily. Classic translation factor GTPase family. EF-Tu/EF-1A subfamily. As to expression, higher expression in leaves than in roots.

It is found in the plastid. It localises to the chloroplast. Functionally, this protein promotes the GTP-dependent binding of aminoacyl-tRNA to the A-site of ribosomes during protein biosynthesis. In Pisum sativum (Garden pea), this protein is Elongation factor Tu, chloroplastic (tufA).